The sequence spans 246 residues: 3'(2'),5'-bisphosphate nucleotidase CysQ (246 aa).

5 residues coordinate Mg(2+): Glu-64, Asp-83, Leu-85, Asp-86, and Asp-205. Glu-64 is a substrate binding site. Residues 85–88 (LDGT) and Asp-205 each bind substrate.

It belongs to the inositol monophosphatase superfamily. CysQ family. It depends on Mg(2+) as a cofactor.

It is found in the cell inner membrane. It carries out the reaction adenosine 3',5'-bisphosphate + H2O = AMP + phosphate. Inhibited by lithium and calcium. In terms of biological role, converts adenosine-3',5'-bisphosphate (PAP) to AMP. May also convert adenosine 3'-phosphate 5'-phosphosulfate (PAPS) to adenosine 5'-phosphosulfate (APS). Has 10000-fold lower activity towards inositol 1,4-bisphosphate (Ins(1,4)P2). The polypeptide is 3'(2'),5'-bisphosphate nucleotidase CysQ (Escherichia coli (strain K12)).